The chain runs to 440 residues: Glycerate 2-kinase (440 aa).

Substrate is bound at residue lysine 58.

This sequence belongs to the glycerate kinase type-1 family. In terms of assembly, homodimer. Mg(2+) serves as cofactor. It depends on Ni(2+) as a cofactor. Requires Mn(2+) as cofactor. The cofactor is Co(2+).

It catalyses the reaction (R)-glycerate + ATP = (2R)-2-phosphoglycerate + ADP + H(+). Catalyzes the ATP-dependent phosphorylation of D-glycerate to 2-phosphoglycerate. It can also utilize GTP, CTP, UTP, ADP or pyrophosphate as phosphate donor. The chain is Glycerate 2-kinase (gck) from Pyrococcus horikoshii (strain ATCC 700860 / DSM 12428 / JCM 9974 / NBRC 100139 / OT-3).